Reading from the N-terminus, the 280-residue chain is Shikimate dehydrogenase (NADP(+)) (280 aa).

Shikimate contacts are provided by residues 20 to 22 (SLS) and Thr67. Catalysis depends on Lys71, which acts as the Proton acceptor. Asn92 and Asp107 together coordinate shikimate. Residues 131–135 (GAGGA) and Gly220 contribute to the NADP(+) site. Residue Tyr222 coordinates shikimate. NADP(+) is bound at residue Gly243.

It belongs to the shikimate dehydrogenase family. As to quaternary structure, homodimer.

It carries out the reaction shikimate + NADP(+) = 3-dehydroshikimate + NADPH + H(+). It functions in the pathway metabolic intermediate biosynthesis; chorismate biosynthesis; chorismate from D-erythrose 4-phosphate and phosphoenolpyruvate: step 4/7. Functionally, involved in the biosynthesis of the chorismate, which leads to the biosynthesis of aromatic amino acids. Catalyzes the reversible NADPH linked reduction of 3-dehydroshikimate (DHSA) to yield shikimate (SA). The protein is Shikimate dehydrogenase (NADP(+)) of Maricaulis maris (strain MCS10) (Caulobacter maris).